The following is a 452-amino-acid chain: Protein FAM222A (452 aa).

The protein belongs to the FAM222 family.

The chain is Protein FAM222A (FAM222A) from Homo sapiens (Human).